The chain runs to 428 residues: Glutamate-1-semialdehyde 2,1-aminomutase (428 aa).

Residue lysine 265 is modified to N6-(pyridoxal phosphate)lysine.

The protein belongs to the class-III pyridoxal-phosphate-dependent aminotransferase family. HemL subfamily. As to quaternary structure, homodimer. Pyridoxal 5'-phosphate serves as cofactor.

The protein resides in the cytoplasm. The enzyme catalyses (S)-4-amino-5-oxopentanoate = 5-aminolevulinate. The protein operates within porphyrin-containing compound metabolism; protoporphyrin-IX biosynthesis; 5-aminolevulinate from L-glutamyl-tRNA(Glu): step 2/2. This chain is Glutamate-1-semialdehyde 2,1-aminomutase, found in Thioalkalivibrio sulfidiphilus (strain HL-EbGR7).